A 464-amino-acid chain; its full sequence is Argininosuccinate lyase (464 aa).

This sequence belongs to the lyase 1 family. Argininosuccinate lyase subfamily.

Its subcellular location is the cytoplasm. It catalyses the reaction 2-(N(omega)-L-arginino)succinate = fumarate + L-arginine. The protein operates within amino-acid biosynthesis; L-arginine biosynthesis; L-arginine from L-ornithine and carbamoyl phosphate: step 3/3. In Pseudomonas fluorescens (strain ATCC BAA-477 / NRRL B-23932 / Pf-5), this protein is Argininosuccinate lyase.